Consider the following 62-residue polypeptide: Large ribosomal subunit protein bL32 (62 aa).

A compositionally biased stretch (basic residues) spans 1 to 18 (MGVPKKRTSKMRRDRRRA). The segment at 1 to 22 (MGVPKKRTSKMRRDRRRAANNN) is disordered.

The protein belongs to the bacterial ribosomal protein bL32 family.

This is Large ribosomal subunit protein bL32 from Myxococcus xanthus (strain DK1622).